A 229-amino-acid chain; its full sequence is UPF0758 protein Cbei_0490 (229 aa).

Residues 107-229 (KITSPKDLAS…FVSLKERGLI (123 aa)) form the MPN domain. Residues His-178, His-180, and Asp-191 each contribute to the Zn(2+) site. The JAMM motif signature appears at 178-191 (HNHPSGDPTPSRED).

This sequence belongs to the UPF0758 family.

In Clostridium beijerinckii (strain ATCC 51743 / NCIMB 8052) (Clostridium acetobutylicum), this protein is UPF0758 protein Cbei_0490.